The following is a 288-amino-acid chain: Sulfur carrier protein FdhD (288 aa).

The disordered stretch occupies residues 1-23 (MMRCMQSPEVHPAAAGDAEPPTH). The Cysteine persulfide intermediate role is filled by Cys127.

Belongs to the FdhD family.

It is found in the cytoplasm. Functionally, required for formate dehydrogenase (FDH) activity. Acts as a sulfur carrier protein that transfers sulfur from IscS to the molybdenum cofactor prior to its insertion into FDH. The polypeptide is Sulfur carrier protein FdhD (Cupriavidus necator (strain ATCC 17699 / DSM 428 / KCTC 22496 / NCIMB 10442 / H16 / Stanier 337) (Ralstonia eutropha)).